Consider the following 485-residue polypeptide: Glutamyl-tRNA(Gln) amidotransferase subunit A (485 aa).

Active-site charge relay system residues include K79 and S154. S178 (acyl-ester intermediate) is an active-site residue.

Belongs to the amidase family. GatA subfamily. As to quaternary structure, heterotrimer of A, B and C subunits.

The enzyme catalyses L-glutamyl-tRNA(Gln) + L-glutamine + ATP + H2O = L-glutaminyl-tRNA(Gln) + L-glutamate + ADP + phosphate + H(+). Allows the formation of correctly charged Gln-tRNA(Gln) through the transamidation of misacylated Glu-tRNA(Gln) in organisms which lack glutaminyl-tRNA synthetase. The reaction takes place in the presence of glutamine and ATP through an activated gamma-phospho-Glu-tRNA(Gln). The sequence is that of Glutamyl-tRNA(Gln) amidotransferase subunit A from Bacillus velezensis (strain DSM 23117 / BGSC 10A6 / LMG 26770 / FZB42) (Bacillus amyloliquefaciens subsp. plantarum).